The chain runs to 294 residues: UPF0718 protein YcgR (294 aa).

The next 8 membrane-spanning stretches (helical) occupy residues 15–35 (ISIL…SGII), 54–74 (LAVL…CGII), 92–112 (AFML…YIAF), 117–137 (SVVF…GVIL), 174–194 (IDEF…AAAM), 215–235 (LVMM…AFIA), 247–267 (LIAF…MMLA), and 273–293 (FVFL…LLVK).

It belongs to the UPF0718 family.

The protein resides in the cell membrane. The polypeptide is UPF0718 protein YcgR (ycgR) (Bacillus subtilis (strain 168)).